Consider the following 670-residue polypeptide: Transketolase, plasmid (670 aa).

His32 provides a ligand contact to substrate. Thiamine diphosphate is bound by residues His72 and 120–122 (GPL). Asp161 lines the Mg(2+) pocket. Thiamine diphosphate-binding residues include Gly162 and Asn191. Asn191 and Ile193 together coordinate Mg(2+). Substrate-binding residues include His267, Arg364, and Ser391. His267 contacts thiamine diphosphate. Glu417 serves as the catalytic Proton donor. Phe443 serves as a coordination point for thiamine diphosphate. The substrate site is built by His467, Asp475, and Arg526.

It belongs to the transketolase family. In terms of assembly, homodimer. Mg(2+) is required as a cofactor. It depends on Ca(2+) as a cofactor. The cofactor is Mn(2+). Co(2+) serves as cofactor. Requires thiamine diphosphate as cofactor.

It carries out the reaction D-sedoheptulose 7-phosphate + D-glyceraldehyde 3-phosphate = aldehydo-D-ribose 5-phosphate + D-xylulose 5-phosphate. It participates in carbohydrate biosynthesis; Calvin cycle. Functionally, catalyzes the transfer of a two-carbon ketol group from a ketose donor to an aldose acceptor, via a covalent intermediate with the cofactor thiamine pyrophosphate. This Cupriavidus necator (strain ATCC 17699 / DSM 428 / KCTC 22496 / NCIMB 10442 / H16 / Stanier 337) (Ralstonia eutropha) protein is Transketolase, plasmid (cbbTP).